The primary structure comprises 64 residues: Large ribosomal subunit protein bL32 (64 aa).

Residues Met-1–Glu-64 form a disordered region. The segment covering Arg-7–Arg-16 has biased composition (basic residues).

Belongs to the bacterial ribosomal protein bL32 family.

This chain is Large ribosomal subunit protein bL32, found in Methylococcus capsulatus (strain ATCC 33009 / NCIMB 11132 / Bath).